We begin with the raw amino-acid sequence, 94 residues long: Large ribosomal subunit protein uL23 (94 aa).

Belongs to the universal ribosomal protein uL23 family. In terms of assembly, part of the 50S ribosomal subunit. Contacts protein L29, and trigger factor when it is bound to the ribosome.

One of the early assembly proteins it binds 23S rRNA. One of the proteins that surrounds the polypeptide exit tunnel on the outside of the ribosome. Forms the main docking site for trigger factor binding to the ribosome. This chain is Large ribosomal subunit protein uL23, found in Latilactobacillus sakei subsp. sakei (strain 23K) (Lactobacillus sakei subsp. sakei).